The primary structure comprises 577 residues: Vacuolar membrane amino acid uptake transporter fnx2 (577 aa).

The span at 1-14 shows a compositional bias: polar residues; sequence MSNPRTKSPNTNRG. Residues 1 to 80 form a disordered region; it reads MSNPRTKSPN…SPHRQDAATT (80 aa). The span at 22 to 39 shows a compositional bias: low complexity; sequence SALLNDSLSSLNGNSSYD. Residues 40 to 62 are compositionally biased toward basic and acidic residues; it reads SIKDSSKNNKDVAEVNEYPRRPE. The next 14 membrane-spanning stretches (helical) occupy residues 91 to 111, 123 to 145, 157 to 177, 186 to 206, 217 to 237, 244 to 264, 286 to 306, 317 to 337, 356 to 376, 391 to 411, 418 to 438, 448 to 468, 490 to 510, and 547 to 567; these read VLPA…IVAS, FSQV…PLFG, LLAA…SRSL, IAGI…SDIV, IINV…GYFA, IGFL…YFTL, LILL…GGNV, LLIA…FVAF, LCNF…PLFF, LIPM…VISL, ITVG…RYGY, YPFS…VAII, GCVL…GIKL, and LLGS…CAFV.

Belongs to the major facilitator superfamily.

The protein resides in the vacuole. It is found in the membrane. In terms of biological role, MFS-type transporter involved in vacuolar amino acid uptake. This Schizosaccharomyces pombe (strain 972 / ATCC 24843) (Fission yeast) protein is Vacuolar membrane amino acid uptake transporter fnx2 (fnx2).